The sequence spans 1755 residues: E3 ubiquitin-protein ligase UBR2 (1755 aa).

N-acetylalanine is present on Ala-2. A Glycyl lysine isopeptide (Lys-Gly) (interchain with G-Cter in ubiquitin) cross-link involves residue Lys-94. The UBR-type zinc-finger motif lies at 97-168 (HLCGRVFKVG…EGPYCQKHKL (72 aa)). Zn(2+)-binding residues include Cys-99, Cys-112, Cys-115, Cys-124, Cys-127, His-133, and His-136. Phe-148 is an a peptide binding site. Residue Cys-149 coordinates Zn(2+). Residue Asp-150 participates in a peptide binding. Residue Cys-151 participates in Zn(2+) binding. Asp-153 lines the a peptide pocket. Lys-158 is covalently cross-linked (Glycyl lysine isopeptide (Lys-Gly) (interchain with G-Cter in ubiquitin)). Zn(2+) is bound at residue Cys-163. Lys-165 participates in a covalent cross-link: Glycyl lysine isopeptide (Lys-Gly) (interchain with G-Cter in ubiquitin). Position 166 (His-166) interacts with Zn(2+). Glycyl lysine isopeptide (Lys-Gly) (interchain with G-Cter in ubiquitin) cross-links involve residues Lys-248, Lys-255, and Lys-470. A Phosphoserine modification is found at Ser-476. Glycyl lysine isopeptide (Lys-Gly) (interchain with G-Cter in ubiquitin) cross-links involve residues Lys-488, Lys-568, Lys-779, and Lys-789. The interval 1012 to 1033 (AEAEGTIMEESSRDKDKAERKR) is disordered. Residues 1019–1054 (MEESSRDKDKAERKRKAEIARLRREKIMAQMSEMQR) are a coiled coil. Residues 1021–1033 (ESSRDKDKAERKR) show a composition bias toward basic and acidic residues. Zn(2+)-binding residues include Cys-1108, Cys-1111, Cys-1168, His-1170, His-1173, Cys-1176, Cys-1210, and Cys-1213. Residues 1108 to 1214 (CILCQEEQEV…NGEFLCPLCE (107 aa)) form an RING-type; atypical zinc finger. Glycyl lysine isopeptide (Lys-Gly) (interchain with G-Cter in ubiquitin) cross-links involve residues Lys-1496, Lys-1599, and Lys-1689. Residue Ser-1694 is modified to Phosphoserine. A Phosphotyrosine modification is found at Tyr-1697.

Belongs to the E3 ubiquitin-protein ligase UBR1-like family. In terms of assembly, interacts with UBE2B; promotes the UBE2B-H2A interaction and the ubiquitination of histone H2A by UBE2B and UBR2. Interacts with RECQL4. Interacts with Tex19.1 and Tex19.2; does not lead to Tex19.1 degradation and stabilizes it. Interacts with L1RE1. Interacts with CASP8. Interacts with ATXN3. Interacts with UBE2O. Post-translationally, dephosphorylated by DUSP22 at Ser-1694 and Tyr-1697, leading to subsequent ubiquitination and proteasomal degradation. In terms of processing, 'Lys-48'-linked ubiquitinated at Lys-94, Lys-779 and Lys-1599 following DUSP22-mediated dephosphorylation of Ser-1694 and Tyr-1697 which promotes UBR2 interaction with the SCF(FBW1A) E3 ubiquitin-protein ligase complex. Highly expressed in skeletal muscle. Also expressed in heart, kidney and testis. Expressed in acinar cells of the pancreas. In testes, expressed primarily in spermatocytes. Expressed in cerebellum.

It localises to the nucleus. Its subcellular location is the chromosome. The catalysed reaction is S-ubiquitinyl-[E2 ubiquitin-conjugating enzyme]-L-cysteine + [acceptor protein]-L-lysine = [E2 ubiquitin-conjugating enzyme]-L-cysteine + N(6)-ubiquitinyl-[acceptor protein]-L-lysine.. Its pathway is protein modification; protein ubiquitination. E3 ubiquitin-protein ligase which is a component of the N-end rule pathway. Recognizes and binds to proteins bearing specific N-terminal residues (N-degrons) that are destabilizing according to the N-end rule, leading to their ubiquitination and subsequent degradation. Recognizes both type-1 and type-2 N-degrons, containing positively charged amino acids (Arg, Lys and His) and bulky and hydrophobic amino acids, respectively. Does not ubiquitinate proteins that are acetylated at the N-terminus. In contrast, it strongly binds methylated N-degrons. Plays a critical role in chromatin inactivation and chromosome-wide transcriptional silencing during meiosis via ubiquitination of histone H2A. Binds leucine and is a negative regulator of the leucine-mTOR signaling pathway, thereby controlling cell growth. Required for spermatogenesis, promotes, with Tex19.1, SPO11-dependent recombination foci to accumulate and drive robust homologous chromosome synapsis. Polyubiquitinates LINE-1 retrotransposon encoded, LIRE1, which induces degradation, inhibiting LINE-1 retrotransposon mobilization. Catalyzes ubiquitination and degradation of the N-terminal part of NLRP1B following NLRP1B activation by pathogens and other damage-associated signals: ubiquitination promotes degradation of the N-terminal part and subsequent release of the cleaved C-terminal part of NLRP1B, which polymerizes and forms the NLRP1B inflammasome followed by host cell pyroptosis. Plays a role in T-cell receptor signaling by inducing 'Lys-63'-linked ubiquitination of lymphocyte cell-specific kinase LCK. This activity is regulated by DUSP22, which induces 'Lys-48'-linked ubiquitination of UBR2, leading to its proteasomal degradation by SCF E3 ubiquitin-protein ligase complex. The protein is E3 ubiquitin-protein ligase UBR2 of Mus musculus (Mouse).